Reading from the N-terminus, the 163-residue chain is ATP synthase subunit b', chloroplastic (163 aa).

A helical transmembrane segment spans residues 26 to 46 (ATLPLMAVQILLFMVILNAVF).

This sequence belongs to the ATPase B chain family. As to quaternary structure, F-type ATPases have 2 components, F(1) - the catalytic core - and F(0) - the membrane proton channel. F(1) has five subunits: alpha(3), beta(3), gamma(1), delta(1), epsilon(1). F(0) has four main subunits: a(1), b(1), b'(1) and c(10-14). The alpha and beta chains form an alternating ring which encloses part of the gamma chain. F(1) is attached to F(0) by a central stalk formed by the gamma and epsilon chains, while a peripheral stalk is formed by the delta, b and b' chains.

The protein localises to the plastid. Its subcellular location is the chloroplast thylakoid membrane. F(1)F(0) ATP synthase produces ATP from ADP in the presence of a proton or sodium gradient. F-type ATPases consist of two structural domains, F(1) containing the extramembraneous catalytic core and F(0) containing the membrane proton channel, linked together by a central stalk and a peripheral stalk. During catalysis, ATP synthesis in the catalytic domain of F(1) is coupled via a rotary mechanism of the central stalk subunits to proton translocation. Functionally, component of the F(0) channel, it forms part of the peripheral stalk, linking F(1) to F(0). The b'-subunit is a diverged and duplicated form of b found in plants and photosynthetic bacteria. This Guillardia theta (Cryptophyte) protein is ATP synthase subunit b', chloroplastic.